Here is a 459-residue protein sequence, read N- to C-terminus: Putrescine aminotransferase (459 aa).

Pyridoxal 5'-phosphate contacts are provided by residues 150–151 (GT) and glutamine 274. Residue lysine 300 is modified to N6-(pyridoxal phosphate)lysine. Threonine 332 is a binding site for pyridoxal 5'-phosphate.

Belongs to the class-III pyridoxal-phosphate-dependent aminotransferase family. Putrescine aminotransferase subfamily. Requires pyridoxal 5'-phosphate as cofactor.

It catalyses the reaction an alkane-alpha,omega-diamine + 2-oxoglutarate = an omega-aminoaldehyde + L-glutamate. The catalysed reaction is putrescine + 2-oxoglutarate = 1-pyrroline + L-glutamate + H2O. The enzyme catalyses cadaverine + 2-oxoglutarate = 5-aminopentanal + L-glutamate. Its pathway is amine and polyamine degradation; putrescine degradation; 4-aminobutanal from putrescine (transaminase route): step 1/1. Catalyzes the aminotransferase reaction from putrescine to 2-oxoglutarate, leading to glutamate and 4-aminobutanal, which spontaneously cyclizes to form 1-pyrroline. This is the first step in one of two pathways for putrescine degradation, where putrescine is converted into 4-aminobutanoate (gamma-aminobutyrate or GABA) via 4-aminobutanal. Also functions as a cadaverine transaminase in a a L-lysine degradation pathway to succinate that proceeds via cadaverine, glutarate and L-2-hydroxyglutarate. This Enterobacter sp. (strain 638) protein is Putrescine aminotransferase.